A 906-amino-acid polypeptide reads, in one-letter code: Protein translocase subunit SecA (906 aa).

Residues Gln-86, 104 to 108, and Asp-511 contribute to the ATP site; that span reads GEGKT. Basic and acidic residues-rich tracts occupy residues 853 to 865 and 877 to 888; these read HESV…RHDE and VRREGPKVKRND. Positions 853 to 906 are disordered; the sequence is HESVIDNNQRHDEDEQEETPKVQQVRREGPKVKRNDPCPCGSGKKYKQCHGKVE. Zn(2+) contacts are provided by Cys-890, Cys-892, Cys-901, and His-902. Residues 896-906 show a composition bias toward basic residues; that stretch reads KKYKQCHGKVE.

The protein belongs to the SecA family. In terms of assembly, monomer and homodimer. Part of the essential Sec protein translocation apparatus which comprises SecA, SecYEG and auxiliary proteins SecDF-YajC and YidC. Zn(2+) is required as a cofactor.

It is found in the cell inner membrane. The protein resides in the cytoplasm. It catalyses the reaction ATP + H2O + cellular proteinSide 1 = ADP + phosphate + cellular proteinSide 2.. Its function is as follows. Part of the Sec protein translocase complex. Interacts with the SecYEG preprotein conducting channel. Has a central role in coupling the hydrolysis of ATP to the transfer of proteins into and across the cell membrane, serving both as a receptor for the preprotein-SecB complex and as an ATP-driven molecular motor driving the stepwise translocation of polypeptide chains across the membrane. The polypeptide is Protein translocase subunit SecA (Francisella tularensis subsp. novicida (strain U112)).